The sequence spans 108 residues: uncharacterized protein (108 aa).

Residues 64–84 (LFIIYYYYYLLICLSPHFFPI) form a helical membrane-spanning segment.

It localises to the membrane. This is an uncharacterized protein from Schizosaccharomyces pombe (strain 972 / ATCC 24843) (Fission yeast).